Here is a 368-residue protein sequence, read N- to C-terminus: tRNA-specific 2-thiouridylase MnmA (368 aa).

Residues 10 to 17 (AMSGGIDS) and methionine 36 contribute to the ATP site. The Nucleophile role is filled by cysteine 106. A disulfide bond links cysteine 106 and cysteine 203. Glycine 130 lines the ATP pocket. The interval 152–154 (KDQ) is interaction with tRNA. Cysteine 203 functions as the Cysteine persulfide intermediate in the catalytic mechanism. The interval 313–314 (RY) is interaction with tRNA.

It belongs to the MnmA/TRMU family.

The protein resides in the cytoplasm. The catalysed reaction is S-sulfanyl-L-cysteinyl-[protein] + uridine(34) in tRNA + AH2 + ATP = 2-thiouridine(34) in tRNA + L-cysteinyl-[protein] + A + AMP + diphosphate + H(+). Functionally, catalyzes the 2-thiolation of uridine at the wobble position (U34) of tRNA, leading to the formation of s(2)U34. The sequence is that of tRNA-specific 2-thiouridylase MnmA from Cytophaga hutchinsonii (strain ATCC 33406 / DSM 1761 / CIP 103989 / NBRC 15051 / NCIMB 9469 / D465).